Here is a 447-residue protein sequence, read N- to C-terminus: Tol-Pal system protein TolB (447 aa).

A signal peptide spans 1–29 (MITMSRIRSLAAFAVFVILGVAAVLPAQA).

The protein belongs to the TolB family. In terms of assembly, the Tol-Pal system is composed of five core proteins: the inner membrane proteins TolA, TolQ and TolR, the periplasmic protein TolB and the outer membrane protein Pal. They form a network linking the inner and outer membranes and the peptidoglycan layer.

It localises to the periplasm. In terms of biological role, part of the Tol-Pal system, which plays a role in outer membrane invagination during cell division and is important for maintaining outer membrane integrity. This Paramagnetospirillum magneticum (strain ATCC 700264 / AMB-1) (Magnetospirillum magneticum) protein is Tol-Pal system protein TolB.